Consider the following 91-residue polypeptide: Defensin-like protein 220 (91 aa).

The N-terminal stretch at 1–19 is a signal peptide; the sequence is MKTIFFFITFIVLVSSCTS. Intrachain disulfides connect C61/C78, C64/C83, and C68/C85.

It belongs to the DEFL family.

It localises to the secreted. This chain is Defensin-like protein 220, found in Arabidopsis thaliana (Mouse-ear cress).